Reading from the N-terminus, the 534-residue chain is Cysteine/serine-rich nuclear protein 2 (534 aa).

Met-1 carries the post-translational modification N-acetylmethionine. Disordered regions lie at residues 1–52 (MDAF…FTPT) and 480–534 (DCGL…PLAV). Over residues 31-40 (SSDSADSCDS) the composition is skewed to low complexity. Positions 42-52 (NPPTTASFTPT) are enriched in polar residues. The span at 480–492 (DCGLKEPESEDLH) shows a compositional bias: basic and acidic residues.

This sequence belongs to the AXUD1 family. In terms of tissue distribution, highest expression detected in thymus, brain and ovary. Low levels detected in naive T-cells.

The protein resides in the nucleus. Functionally, binds to the consensus sequence 5'-AGAGTG-3' and has transcriptional activator activity. May play a role in apoptosis. This is Cysteine/serine-rich nuclear protein 2 (Csrnp2) from Mus musculus (Mouse).